The sequence spans 93 residues: MITPRNIFRHELIGLSVRIARSVHRDIQGISGRVVDETRNTLRIEMDDGREITVPKGIAVFHFRTPQGELVEIDGRALVARPEERIKKKFRKP.

Belongs to the eukaryotic/archaeal RNase P protein component 1 family. As to quaternary structure, consists of a catalytic RNA component and at least 4-5 protein subunits.

It is found in the cytoplasm. The enzyme catalyses Endonucleolytic cleavage of RNA, removing 5'-extranucleotides from tRNA precursor.. Functionally, part of ribonuclease P, a protein complex that generates mature tRNA molecules by cleaving their 5'-ends. The chain is Ribonuclease P protein component 1 from Methanothermobacter thermautotrophicus (strain ATCC 29096 / DSM 1053 / JCM 10044 / NBRC 100330 / Delta H) (Methanobacterium thermoautotrophicum).